The sequence spans 405 residues: Calsequestrin-1 (405 aa).

The first 34 residues, 1 to 34 (MRATDRMGARAVSELRLALLFVLVLGTPRLGVQG), serve as a signal peptide directing secretion. At Tyr43 the chain carries Phosphotyrosine. A Phosphoserine modification is found at Ser81. Thr124 carries the post-translational modification Phosphothreonine. Residue Ser216 is modified to Phosphoserine. An N-linked (GlcNAc...) asparagine glycan is attached at Asn350. The disordered stretch occupies residues 382–405 (EGEINTEDDDDDDDDDDDDDDDDD).

It belongs to the calsequestrin family. In terms of assembly, monomer; increases in response to a depletion of intracellular calcium. Homodimer. Homotetramer and homopolymer. Can form linear homooligomers. Ca(2+) ions promote oligomerization. Interacts (via C-terminal end and preferentially with the monomeric form) with STIM1; this interaction increases in response to a depletion of intracellular calcium, decreases both STIM1 aggregation and clustering, interaction of STIM1 with ORAI1 and store-operated Ca(2+) entry (SOCE) activity. Interacts with ASPH and TRDN. In terms of processing, N-glycosylated. In terms of tissue distribution, detected in skeletal muscle (at protein level). Detected in skeletal muscle.

Its subcellular location is the endoplasmic reticulum. It localises to the sarcoplasmic reticulum. It is found in the sarcoplasmic reticulum lumen. The protein resides in the sarcoplasmic reticulum membrane. The protein localises to the mitochondrion matrix. Its function is as follows. Calsequestrin is a high-capacity, moderate affinity, calcium-binding protein and thus acts as an internal calcium store in muscle. Calcium ions are bound by clusters of acidic residues at the protein surface, often at the interface between subunits. Can bind around 80 Ca(2+) ions. Regulates the release of lumenal Ca(2+) via the calcium release channel RYR1; this plays an important role in triggering muscle contraction. Negatively regulates store-operated Ca(2+) entry (SOCE) activity. This is Calsequestrin-1 (Casq1) from Mus musculus (Mouse).